A 360-amino-acid polypeptide reads, in one-letter code: Alpha-2-HS-glycoprotein (360 aa).

An N-terminal signal peptide occupies residues 1-15; it reads LVLLLSLAQLWSCHL. The 107-residue stretch at 24-130 folds into the Cystatin fetuin-A-type 1 domain; that stretch reads YREHNCDDPE…QFTVLSAKCD (107 aa). 6 disulfide bridges follow: C29–C351, C86–C97, C111–C129, C143–C146, C205–C216, and C227–C244. N96 carries N-linked (GlcNAc...) asparagine glycosylation. Residue S131 is modified to Phosphoserine. Residue T132 is modified to Phosphothreonine. S135 is subject to Phosphoserine. A Cystatin fetuin-A-type 2 domain is found at 141–252; sequence KLCPDCPLLT…TCTIFPAQPV (112 aa). N153 carries N-linked (GlcNAc...) asparagine glycosylation. The interval 260–285 is disordered; sequence VAGAAAVEPAPAVDPASPVSPPDGQS. T312 carries the phosphothreonine modification. 3 positions are modified to phosphoserine: S318, S321, and S323.

This sequence belongs to the fetuin family. Phosphorylated by FAM20C in the extracellular medium. Bone marrow.

The protein resides in the secreted. Functionally, a cell adhesion protein that binds immature cells of the granulocyte lineage. The protein is Alpha-2-HS-glycoprotein (AHSG) of Oryctolagus cuniculus (Rabbit).